Reading from the N-terminus, the 238-residue chain is TATA-box-binding protein (238 aa).

The tract at residues 1 to 58 (MDLKLPPTNPTNPQQAKTFMKSIEEDEKNKAEDLDIIKKEDIDEPKQEDTTDGNGGGG) is disordered. Basic and acidic residues predominate over residues 27–49 (EKNKAEDLDIIKKEDIDEPKQED). A run of 2 repeats spans residues 65-141 (LQNI…ARII) and 155-232 (IQNI…YPVL).

This sequence belongs to the TBP family. As to quaternary structure, belongs to the TFIID complex together with the TBP-associated factors (TAFs). Binds DNA as monomer.

It localises to the nucleus. General transcription factor that functions at the core of the DNA-binding multiprotein factor TFIID. Binding of TFIID to the TATA box is the initial transcriptional step of the pre-initiation complex (PIC), playing a role in the activation of eukaryotic genes transcribed by RNA polymerase II. This chain is TATA-box-binding protein (TBP1), found in Candida albicans (strain SC5314 / ATCC MYA-2876) (Yeast).